The chain runs to 432 residues: UDP-N-acetylglucosamine 1-carboxyvinyltransferase (432 aa).

Position 22–23 (22–23) interacts with phosphoenolpyruvate; the sequence is KN. A UDP-N-acetyl-alpha-D-glucosamine-binding site is contributed by Arg-96. The Proton donor role is filled by Cys-120. At Cys-120 the chain carries 2-(S-cysteinyl)pyruvic acid O-phosphothioketal. Residues 125–129, Asp-310, and Ile-332 contribute to the UDP-N-acetyl-alpha-D-glucosamine site; that span reads RPVDL.

The protein belongs to the EPSP synthase family. MurA subfamily.

The protein resides in the cytoplasm. It catalyses the reaction phosphoenolpyruvate + UDP-N-acetyl-alpha-D-glucosamine = UDP-N-acetyl-3-O-(1-carboxyvinyl)-alpha-D-glucosamine + phosphate. Its pathway is cell wall biogenesis; peptidoglycan biosynthesis. Its function is as follows. Cell wall formation. Adds enolpyruvyl to UDP-N-acetylglucosamine. In Caulobacter sp. (strain K31), this protein is UDP-N-acetylglucosamine 1-carboxyvinyltransferase.